A 466-amino-acid polypeptide reads, in one-letter code: UDP-N-acetylmuramate--L-alanine ligase (466 aa).

Position 114-120 (114-120 (GTHGKTT)) interacts with ATP.

Belongs to the MurCDEF family.

The protein localises to the cytoplasm. The catalysed reaction is UDP-N-acetyl-alpha-D-muramate + L-alanine + ATP = UDP-N-acetyl-alpha-D-muramoyl-L-alanine + ADP + phosphate + H(+). It functions in the pathway cell wall biogenesis; peptidoglycan biosynthesis. Its function is as follows. Cell wall formation. The protein is UDP-N-acetylmuramate--L-alanine ligase of Chlorobium phaeobacteroides (strain DSM 266 / SMG 266 / 2430).